Here is a 226-residue protein sequence, read N- to C-terminus: MTTTELVALLHLASPALPIGAFSYSQGFEAALDANLIRDADTARDWIAGGLTDVLAHGELPFLAHQLARWHAHDADALARENAWFVASRESAELRRETEQMGWSLAQLCTSLEWGDTARRATLATISPIALPTAFAYAAAAHDASADAVLAAYAFGWVENQTSAALKAVPLGQLAGQRIIVALRGAIDAAVRRALATPPDAVNTFAPQLGILSARHETQYSRLFRS.

It belongs to the UreF family. As to quaternary structure, ureD, UreF and UreG form a complex that acts as a GTP-hydrolysis-dependent molecular chaperone, activating the urease apoprotein by helping to assemble the nickel containing metallocenter of UreC. The UreE protein probably delivers the nickel.

The protein localises to the cytoplasm. In terms of biological role, required for maturation of urease via the functional incorporation of the urease nickel metallocenter. This chain is Urease accessory protein UreF, found in Burkholderia ambifaria (strain ATCC BAA-244 / DSM 16087 / CCUG 44356 / LMG 19182 / AMMD) (Burkholderia cepacia (strain AMMD)).